Reading from the N-terminus, the 286-residue chain is Prohibitin-6, mitochondrial (286 aa).

Over 1–12 (MNFKNVKVPKGP) the chain is Mitochondrial matrix. Residues 13–35 (GGGVIAAVVIGGLSLYGATHTLY) form a helical; Signal-anchor for type II membrane protein membrane-spanning segment. Topologically, residues 36 to 286 (NVDGGHRAIV…AMDLDVKPKK (251 aa)) are mitochondrial intermembrane.

The protein belongs to the prohibitin family. Component of a prohibitin multimeric complex in mitochondrial membranes. As to expression, mostly expressed in proliferative tissues, including vasculature, shoot and root apical tissues.

It is found in the mitochondrion inner membrane. Functionally, prohibitin probably acts as a holdase/unfoldase for the stabilization of newly synthesized mitochondrial proteins. In Arabidopsis thaliana (Mouse-ear cress), this protein is Prohibitin-6, mitochondrial (PHB6).